A 187-amino-acid polypeptide reads, in one-letter code: UPF0301 protein YPO0936/y3322/YP_3506 (187 aa).

This sequence belongs to the UPF0301 (AlgH) family.

This chain is UPF0301 protein YPO0936/y3322/YP_3506, found in Yersinia pestis.